The following is a 191-amino-acid chain: Phospholipase A2-delta (191 aa).

The signal sequence occupies residues 1–25 (MIRGGALTHVALGLTVFLLLAVVHS). Intrachain disulfides connect C29-C56, C33-C62, C38-C115, C49-C69, C68-C93, and C75-C86. Ca(2+) is bound by residues Y48, G50, and Y53. H72 is an active-site residue. D73 serves as a coordination point for Ca(2+). Positions 161–191 (KADTKDGLGTNQGPQTKDGSKVSVPMNPSPS) are disordered.

The protein belongs to the phospholipase A2 family. The cofactor is Ca(2+). In terms of tissue distribution, specifically expressed in flowers but at a low level. Detected specifically in the pollen.

It is found in the secreted. It localises to the endoplasmic reticulum. It carries out the reaction a 1,2-diacyl-sn-glycero-3-phosphocholine + H2O = a 1-acyl-sn-glycero-3-phosphocholine + a fatty acid + H(+). In terms of biological role, PA2 catalyzes the calcium-dependent hydrolysis of the 2-acyl groups in 3-sn-phosphoglycerides. Releases lysophospholipids (LPLs) and free fatty acids (FFAs) from membrane phospholipids in response to hormones and other external stimuli. Plays a role in pollen development and germination and tube growth. The sequence is that of Phospholipase A2-delta (PLA2-DELTA) from Arabidopsis thaliana (Mouse-ear cress).